Reading from the N-terminus, the 238-residue chain is Chromosome partition protein MukE (238 aa).

The interval 206-238 is disordered; that stretch reads EESSQSSFDLDENEKLSDISAEEQHELELEGDA. Over residues 218-238 the composition is skewed to basic and acidic residues; it reads NEKLSDISAEEQHELELEGDA.

This sequence belongs to the MukE family. Interacts, and probably forms a ternary complex, with MukF and MukB. The complex formation is stimulated by calcium or magnesium.

It is found in the cytoplasm. The protein localises to the nucleoid. Functionally, involved in chromosome condensation, segregation and cell cycle progression. May participate in facilitating chromosome segregation by condensation DNA from both sides of a centrally located replisome during cell division. Probably acts via its interaction with MukB and MukF. This is Chromosome partition protein MukE from Aliivibrio salmonicida (strain LFI1238) (Vibrio salmonicida (strain LFI1238)).